We begin with the raw amino-acid sequence, 277 residues long: S-formylglutathione hydrolase FrmB (277 aa).

Catalysis depends on charge relay system residues S145, D221, and H254.

Belongs to the esterase D family.

It catalyses the reaction S-formylglutathione + H2O = formate + glutathione + H(+). Functionally, serine hydrolase involved in the detoxification of formaldehyde. Hydrolyzes S-formylglutathione to glutathione and formate. This is S-formylglutathione hydrolase FrmB (frmB) from Escherichia coli (strain SMS-3-5 / SECEC).